Consider the following 484-residue polypeptide: Protein nucleotidyltransferase YdiU (484 aa).

Residues Gly81, Gly83, Arg84, Lys103, Asp115, Gly116, Arg166, and Arg173 each coordinate ATP. Asp244 (proton acceptor) is an active-site residue. The Mg(2+) site is built by Asn245 and Asp254. Asp254 is an ATP binding site.

Belongs to the SELO family. Mg(2+) is required as a cofactor. Mn(2+) serves as cofactor.

The enzyme catalyses L-seryl-[protein] + ATP = 3-O-(5'-adenylyl)-L-seryl-[protein] + diphosphate. It carries out the reaction L-threonyl-[protein] + ATP = 3-O-(5'-adenylyl)-L-threonyl-[protein] + diphosphate. It catalyses the reaction L-tyrosyl-[protein] + ATP = O-(5'-adenylyl)-L-tyrosyl-[protein] + diphosphate. The catalysed reaction is L-histidyl-[protein] + UTP = N(tele)-(5'-uridylyl)-L-histidyl-[protein] + diphosphate. The enzyme catalyses L-seryl-[protein] + UTP = O-(5'-uridylyl)-L-seryl-[protein] + diphosphate. It carries out the reaction L-tyrosyl-[protein] + UTP = O-(5'-uridylyl)-L-tyrosyl-[protein] + diphosphate. Functionally, nucleotidyltransferase involved in the post-translational modification of proteins. It can catalyze the addition of adenosine monophosphate (AMP) or uridine monophosphate (UMP) to a protein, resulting in modifications known as AMPylation and UMPylation. This is Protein nucleotidyltransferase YdiU from Shewanella baltica (strain OS185).